A 70-amino-acid chain; its full sequence is Large ribosomal subunit protein uL29 (70 aa).

This sequence belongs to the universal ribosomal protein uL29 family.

This chain is Large ribosomal subunit protein uL29, found in Rickettsia bellii (strain OSU 85-389).